The sequence spans 405 residues: Accessory Sec system protein translocase subunit SecY2 (405 aa).

10 helical membrane-spanning segments follow: residues 14-34 (LFTLFLLFIYVLGSRIILPFV), 63-83 (LSIFSVGLSPWMSAMILWQMF), 104-124 (MYLTLMIAVIQSLAVSLRLPV), 131-151 (ILVVLMNTILLIAGTFFLVWL), 156-176 (ASMGIGGSIVILLSSMVLNIP), 191-211 (GIIVLLALLTLVFSYLLALMY), 247-267 (MYVMSFLSVPAYLFILLGFIF), 285-305 (PLWVYVYISVLFLFSIIFAFV), 343-363 (FSVIGGLFNVVMAGGPMLFVL), and 368-388 (LLRLAMIPGLFMMFGGMIFTI).

It belongs to the SecY/SEC61-alpha family. SecY2 subfamily. As to quaternary structure, component of the accessory SecA2/SecY2 protein translocase complex required to export cell wall proteins. May form heterotrimers with SecE and SecG subunits.

It is found in the cell membrane. Functionally, part of the accessory SecA2/SecY2 system specifically required for export of possible cell wall proteins. The central subunit of a protein translocation channel. The sequence is that of Accessory Sec system protein translocase subunit SecY2 from Streptococcus pneumoniae (strain CGSP14).